We begin with the raw amino-acid sequence, 324 residues long: Fibronectin type III domain-containing protein 8 (324 aa).

The region spanning 179-280 (PDTPFIFEHT…KPYKFATLAT (102 aa)) is the Fibronectin type-III domain.

This chain is Fibronectin type III domain-containing protein 8 (FNDC8), found in Homo sapiens (Human).